Here is a 1224-residue protein sequence, read N- to C-terminus: WD repeat-containing protein 11 (1224 aa).

2 WD repeats span residues 59-108 (KHKA…AQCE) and 111-154 (EHAK…KLWK). Phosphoserine is present on residues S205 and S209. The stretch at 354 to 393 (KTVRPFSMVCCPVNENAAALVVSDGRVMIWELKSAVCNRN) is one WD 3 repeat. Residues S402 and S406 each carry the phosphoserine modification. WD repeat units follow at residues 471–510 (RMCPPLTTKNIKMYQPLLAVGTSNGSVLVYHLTSGLLHKE), 566–605 (NDESAIEMIKVSHLKQYLAVVFRDKPLELWDVRTCTLLRE), 708–745 (GSMGSITCIAWKGDTLVLGDMDGNLNFWDLKGRVSRGI), 747–787 (THRS…MVSS), 793–831 (NVTFRILDVDWCTSDKVILASDDGCIRVLEMSMKSACFR), and 893–940 (SLSN…HSLS).

Component of the complex WDR11 composed of C17orf75, FAM91A1 and WDR11; FAM91A1 and WDR11 are required for proper location of the complex. Interacts (via the N-terminal and the central portion of the protein) with EMX1. Interacts with GLI3; the interaction associateS EMX1 with GLI3. Interacts with TBC1D23; this interaction may be indirect and recruits TBC1D23 to AP-1-derived vesicles. Ubiquitous.

It localises to the cytoplasm. Its subcellular location is the cytoskeleton. The protein resides in the cilium basal body. It is found in the nucleus. The protein localises to the cilium axoneme. It localises to the cytoplasmic vesicle. Its subcellular location is the golgi apparatus. The protein resides in the trans-Golgi network. Functionally, involved in the Hedgehog (Hh) signaling pathway, is essential for normal ciliogenesis. Regulates the proteolytic processing of GLI3 and cooperates with the transcription factor EMX1 in the induction of downstream Hh pathway gene expression and gonadotropin-releasing hormone production. WDR11 complex facilitates the tethering of Adaptor protein-1 complex (AP-1)-derived vesicles. WDR11 complex acts together with TBC1D23 to facilitate the golgin-mediated capture of vesicles generated using AP-1. This chain is WD repeat-containing protein 11 (WDR11), found in Homo sapiens (Human).